The chain runs to 667 residues: WD40 repeat-containing protein DDB_G0271002 (667 aa).

2 WD repeats span residues 165 to 204 (NHGVSTWGIAICPSKPLIAVSSNSHKITIWNLDDENPQET) and 210 to 249 (KHKHNIPSIDFSPCGNYLVSVSIDKNIRIWDVNKRQLLRI). Positions 278–293 (SSNSRDNNNNNSNSNN) are enriched in low complexity. 3 disordered regions span residues 278 to 301 (SSNSRDNNNNNSNSNNNGGGGIII), 316 to 345 (LVENNQEVEPMPEEEEEEEEEEVNQVDNDD), and 389 to 440 (DIIF…ATTT). A compositionally biased stretch (acidic residues) spans 325–345 (PMPEEEEEEEEEEVNQVDNDD). The span at 400–410 (NQHQQQQQQNQ) shows a compositional bias: low complexity. Acidic residues predominate over residues 411-428 (EIEEEGQEGQEEQEDGTE). The segment covering 429-440 (NENNQGTIATTT) has biased composition (low complexity).

In Dictyostelium discoideum (Social amoeba), this protein is WD40 repeat-containing protein DDB_G0271002.